The primary structure comprises 490 residues: Alginate production protein AlgE (490 aa).

A signal peptide spans 1-32; sequence MNSSRSVNPRPSFAPRALSLAIALLLGAPAFA. Composition is skewed to polar residues over residues 102-115 and 343-355; these read DTLQ…NNSR and QFQQ…NRSN. Disordered stretches follow at residues 102 to 121 and 331 to 355; these read DTLQ…GREP and ARGS…NRSN.

The protein belongs to the AlgE family.

It is found in the cell outer membrane. Its pathway is glycan biosynthesis; alginate biosynthesis. Has non-porin-like, channel-forming properties and probably functions as an alginate permeability pore. The protein is Alginate production protein AlgE (algE) of Pseudomonas aeruginosa (strain ATCC 15692 / DSM 22644 / CIP 104116 / JCM 14847 / LMG 12228 / 1C / PRS 101 / PAO1).